Consider the following 215-residue polypeptide: MPAFNRLLPLASLVLIYWVRVCFPVCVEVPSETEAVQGNPMKLRCISCMKREEVEATTVVEWFYRPEGGKDFLIYEYRNGHQEVESPFQGRLQWNGSKDLQDVSITVLNVTLNDSGLYTCNVSREFEFEAHRPFVKTTRLIPLRVTEEAGEDFTSVVSEIMMYILLVFLTLWLFIEMIYCYRKVSKAEEAAQENASDYLAIPSENKENSVVPVEE.

An N-terminal signal peptide occupies residues 1-24; sequence MPAFNRLLPLASLVLIYWVRVCFP. The Ig-like C2-type domain occupies 25–138; sequence VCVEVPSETE…EAHRPFVKTT (114 aa). Residues 25-156 are Extracellular-facing; the sequence is VCVEVPSETE…EEAGEDFTSV (132 aa). Intrachain disulfides connect Cys-26–Cys-48 and Cys-45–Cys-120. Residues Asn-95, Asn-109, Asn-113, and Asn-121 are each glycosylated (N-linked (GlcNAc...) asparagine). The chain crosses the membrane as a helical span at residues 157 to 178; it reads VSEIMMYILLVFLTLWLFIEMI. Topologically, residues 179 to 215 are cytoplasmic; the sequence is YCYRKVSKAEEAAQENASDYLAIPSENKENSVVPVEE.

This sequence belongs to the sodium channel auxiliary subunit SCN3B (TC 8.A.17) family. In terms of assembly, a voltage-gated sodium (Nav) channel consists of an ion-conducting pore-forming alpha subunit functional on its own that is regulated by one or more beta subunits. Forms homodimers and homotrimers. SCN3B is non-covalently associated with alpha subunits and induces the formation of alpha subunit oligomers, including trimers. Interacts with SCN5A/Nav1.5; regulatory subunit of SCN5A/Nav1.5. Interacts with SCN7A/Nav2.1; probable regulatory subunit of SCN7A/Nav2.1. Interacts with SCN10A; regulatory subunit of SCN10A/Nav1.8. Interacts with NFASC; probably involved in targeting the sodium channels to the nodes of Ranvier. Intramolecular disulfide bonds favor the voltage-gated sodium channel oligomeric complex assembly. In terms of processing, N-glycosylated. Expressed broadly in neurons in the central and peripheral nervous systems, but not in glia and most non-neuronal cells. Weak detection in lung and adrenal gland.

It is found in the cell membrane. Its function is as follows. Regulatory subunit of multiple voltage-gated sodium (Nav) channels directly mediating the depolarization of excitable membranes. Navs, also called VGSCs (voltage-gated sodium channels) or VDSCs (voltage-dependent sodium channels), operate by switching between closed and open conformations depending on the voltage difference across the membrane. In the open conformation they allow Na(+) ions to selectively pass through the pore, along their electrochemical gradient. The influx of Na+ ions provokes membrane depolarization, initiating the propagation of electrical signals throughout cells and tissues. The accessory beta subunits participate in localization and functional modulation of the Nav channels. Voltage-gated sodium channels regulatory subunit that modulates channel gating kinetics. Modulates the activity of SCN2A/Nav1.2, causing a hyperpolarizing shift in the voltage-dependence of inactivation and increasing the fraction of channels operating in the fast gating mode. Also able to induce unique persistent SCN2A/Nav1.2-mediated sodium currents. Could modulate the activity of SCN10A/Nav1.8. This Rattus norvegicus (Rat) protein is Sodium channel regulatory subunit beta-3.